The following is a 2051-amino-acid chain: Autophagy-related protein 2 (2051 aa).

A Chorein N-terminal domain is found at Gln-31 to Lys-121. Residues Ser-108–Ala-117 show a composition bias toward basic and acidic residues. Disordered regions lie at residues Ser-108 to Glu-129, Arg-152 to Gly-179, Ser-297 to Ile-331, Asp-363 to Ala-384, Arg-419 to Glu-466, and Pro-501 to Thr-564. Polar residues-rich tracts occupy residues Ala-374–Arg-383 and Pro-426–Met-435. Low complexity predominate over residues Pro-436 to Val-454.

This sequence belongs to the ATG2 family.

The protein localises to the preautophagosomal structure membrane. Its subcellular location is the endoplasmic reticulum membrane. The catalysed reaction is a 1,2-diacyl-sn-glycero-3-phosphocholine(in) = a 1,2-diacyl-sn-glycero-3-phosphocholine(out). The enzyme catalyses a 1,2-diacyl-sn-glycero-3-phospho-L-serine(in) = a 1,2-diacyl-sn-glycero-3-phospho-L-serine(out). It carries out the reaction a 1,2-diacyl-sn-glycero-3-phosphoethanolamine(in) = a 1,2-diacyl-sn-glycero-3-phosphoethanolamine(out). In terms of biological role, lipid transfer protein required for autophagosome completion and peroxisome degradation. Tethers the edge of the isolation membrane (IM) to the endoplasmic reticulum (ER) and mediates direct lipid transfer from ER to IM for IM expansion. Atg-2 binds to the ER exit site (ERES), which is the membrane source for autophagosome formation, using basic residues in its N-terminal region (NR) and to the expanding edge of the IM through its C-terminal region. The latter binding is assisted by an atg-18-PtdIns3P interaction. Atg-2 then extracts phospholipids from the membrane source using its NR and transfers them to atg-9 to the IM through its predicted beta-sheet-rich structure for membrane expansion. This is Autophagy-related protein 2 (apg-2) from Neurospora crassa (strain ATCC 24698 / 74-OR23-1A / CBS 708.71 / DSM 1257 / FGSC 987).